We begin with the raw amino-acid sequence, 455 residues long: DNA repair protein RadA (455 aa).

The C4-type zinc finger occupies 11–28 (CVGCGYVHPKWLGRCPEC). 97 to 104 (GEPGIGKS) contributes to the ATP binding site. The RadA KNRFG motif motif lies at 250 to 254 (KNRFG). A lon-protease-like region spans residues 350–455 (DIYVNVAGGI…IAEIFSKAKA (106 aa)).

The protein belongs to the RecA family. RadA subfamily.

DNA-dependent ATPase involved in processing of recombination intermediates, plays a role in repairing DNA breaks. Stimulates the branch migration of RecA-mediated strand transfer reactions, allowing the 3' invading strand to extend heteroduplex DNA faster. Binds ssDNA in the presence of ADP but not other nucleotides, has ATPase activity that is stimulated by ssDNA and various branched DNA structures, but inhibited by SSB. Does not have RecA's homology-searching function. This is DNA repair protein RadA from Treponema pallidum (strain Nichols).